Reading from the N-terminus, the 408-residue chain is Aminomethyltransferase, mitochondrial (408 aa).

A mitochondrion-targeting transit peptide spans 1–30 (MRGGGLWQLGQSVTRRLAQAEKKVIARRCF). The substrate site is built by E235, R266, and Y404.

This sequence belongs to the GcvT family. As to quaternary structure, the glycine cleavage system is composed of four proteins: P, T, L and H.

It localises to the mitochondrion. It catalyses the reaction N(6)-[(R)-S(8)-aminomethyldihydrolipoyl]-L-lysyl-[protein] + (6S)-5,6,7,8-tetrahydrofolate = N(6)-[(R)-dihydrolipoyl]-L-lysyl-[protein] + (6R)-5,10-methylene-5,6,7,8-tetrahydrofolate + NH4(+). Its function is as follows. The glycine cleavage system catalyzes the degradation of glycine. This is Aminomethyltransferase, mitochondrial (GDCST) from Mesembryanthemum crystallinum (Common ice plant).